The sequence spans 344 residues: tRNA N6-adenosine threonylcarbamoyltransferase (344 aa).

Fe cation is bound by residues histidine 112 and histidine 116. Substrate is bound by residues 134 to 138, aspartate 167, glycine 180, and asparagine 280; that span reads LASGG. Residue aspartate 308 participates in Fe cation binding.

This sequence belongs to the KAE1 / TsaD family. Fe(2+) is required as a cofactor.

The protein localises to the cytoplasm. It carries out the reaction L-threonylcarbamoyladenylate + adenosine(37) in tRNA = N(6)-L-threonylcarbamoyladenosine(37) in tRNA + AMP + H(+). In terms of biological role, required for the formation of a threonylcarbamoyl group on adenosine at position 37 (t(6)A37) in tRNAs that read codons beginning with adenine. Is involved in the transfer of the threonylcarbamoyl moiety of threonylcarbamoyl-AMP (TC-AMP) to the N6 group of A37, together with TsaE and TsaB. TsaD likely plays a direct catalytic role in this reaction. The polypeptide is tRNA N6-adenosine threonylcarbamoyltransferase (Rickettsia massiliae (strain Mtu5)).